The chain runs to 26 residues: 83 kDa hypersensitivity protein (26 aa).

Residues 1 to 26 (FTPEDFISAPRRGEAIPDPKGELAVF) are disordered. The segment covering 11-26 (RRGEAIPDPKGELAVF) has biased composition (basic and acidic residues).

The polypeptide is 83 kDa hypersensitivity protein (Trichophyton tonsurans (Scalp ringworm fungus)).